We begin with the raw amino-acid sequence, 919 residues long: Translocase of chloroplast 101, chloroplastic (919 aa).

Disordered regions lie at residues 20–47 (SASR…VIEG) and 64–211 (VDDE…NETR). Residues 73–88 (SENKAVVETEKVESKP) show a composition bias toward basic and acidic residues. Over residues 96–128 (FAEEDGDSDADAEDEDDEDDEDDDEDDDDEDDK) the composition is skewed to acidic residues. Positions 182–207 (QRPNGAPSTQLTATTEENANSDTAEG) are enriched in polar residues. One can recognise an AIG1-type G domain in the interval 284–513 (DFACTILVLG…KLQETATPGR (230 aa)). Residues 293–300 (GKTGVGKS) form a G1 region. Residue 296 to 301 (GVGKSA) coordinates GTP. Ser-300 is a Mg(2+) binding site. The segment at 319 to 323 (PSTNK) is G2. Residues 340-343 (DTPG) form a G3 region. Positions 412–415 (THAS) are G4. Residues His-413 and 461–462 (EN) contribute to the GTP site. The tract at residues 461–463 (ENH) is G5. Disordered regions lie at residues 540 to 585 (LPDE…LTKE) and 611 to 650 (RRRK…PMPD). A compositionally biased stretch (acidic residues) spans 543–567 (EQLDESDESDDDEEEEDSEADDYDE). Over residues 574–585 (LSKEELEELTKE) the composition is skewed to basic and acidic residues. Residues 629 to 638 (AQPDEADDEA) are compositionally biased toward acidic residues. Residues 641-650 (PAAVPVPMPD) are compositionally biased toward low complexity. A helical membrane pass occupies residues 893–914 (MVLIGIVPILRSLINCRFGFGG).

It belongs to the TRAFAC class TrmE-Era-EngA-EngB-Septin-like GTPase superfamily. AIG1/Toc34/Toc159-like paraseptin GTPase family. TOC159 subfamily. Part of the TOC core complex. Mg(2+) serves as cofactor.

It is found in the plastid. The protein resides in the chloroplast outer membrane. Functionally, GTPase involved in protein precursor import into chloroplasts. Seems to recognize chloroplast-destined precursor proteins and regulate their presentation to the translocation channel through GTP hydrolysis. Probably specialized in the import of nuclear encoded non-photosynthetic preproteins from the cytoplasm to the chloroplast. This chain is Translocase of chloroplast 101, chloroplastic, found in Physcomitrium patens (Spreading-leaved earth moss).